The sequence spans 60 residues: UPF0434 protein mma_2578 (60 aa).

The protein belongs to the UPF0434 family.

In Janthinobacterium sp. (strain Marseille) (Minibacterium massiliensis), this protein is UPF0434 protein mma_2578.